We begin with the raw amino-acid sequence, 342 residues long: MTVKPLRDVTPKPLEGEERLEQSLRPATFDDYVGQVKIVDNVKVYAAAARQRGESLDHVLLSGPPGLGKTSLAHILARELGVTLHVTSGPALVKKGDLAGLLTALAPRDILFIDEIHRLSPAVEEALYPAMEDYRFDVVLGAGLGAQTMEMKLERFTLVGATTRTGLLASPLRDRFPIQERLEYYGPAELKEIAVRAARKLGLPVDEDGAEELARRARGTPRIAIRLLQRARDFAQVEGDGRLTREVVDRTLRRLEVDARGLDAMDRRILAAVIDTFGGGPVGIDAVAAAVGEESGTLEDVYEPFLVREGYLARTPRGRVALPAAYAHLGRDRSGGKQGSLV.

The interval 1–185 (MTVKPLRDVT…FPIQERLEYY (185 aa)) is large ATPase domain (RuvB-L). ATP contacts are provided by residues leucine 24, arginine 25, glycine 66, lysine 69, threonine 70, serine 71, 132-134 (EDY), arginine 175, tyrosine 185, and arginine 222. Threonine 70 is a Mg(2+) binding site. The small ATPAse domain (RuvB-S) stretch occupies residues 186 to 256 (GPAELKEIAV…VVDRTLRRLE (71 aa)). The interval 259–342 (ARGLDAMDRR…RSGGKQGSLV (84 aa)) is head domain (RuvB-H). Residues arginine 314 and arginine 319 each contribute to the DNA site.

This sequence belongs to the RuvB family. As to quaternary structure, homohexamer. Forms an RuvA(8)-RuvB(12)-Holliday junction (HJ) complex. HJ DNA is sandwiched between 2 RuvA tetramers; dsDNA enters through RuvA and exits via RuvB. An RuvB hexamer assembles on each DNA strand where it exits the tetramer. Each RuvB hexamer is contacted by two RuvA subunits (via domain III) on 2 adjacent RuvB subunits; this complex drives branch migration. In the full resolvosome a probable DNA-RuvA(4)-RuvB(12)-RuvC(2) complex forms which resolves the HJ.

The protein localises to the cytoplasm. The catalysed reaction is ATP + H2O = ADP + phosphate + H(+). Functionally, the RuvA-RuvB-RuvC complex processes Holliday junction (HJ) DNA during genetic recombination and DNA repair, while the RuvA-RuvB complex plays an important role in the rescue of blocked DNA replication forks via replication fork reversal (RFR). RuvA specifically binds to HJ cruciform DNA, conferring on it an open structure. The RuvB hexamer acts as an ATP-dependent pump, pulling dsDNA into and through the RuvAB complex. RuvB forms 2 homohexamers on either side of HJ DNA bound by 1 or 2 RuvA tetramers; 4 subunits per hexamer contact DNA at a time. Coordinated motions by a converter formed by DNA-disengaged RuvB subunits stimulates ATP hydrolysis and nucleotide exchange. Immobilization of the converter enables RuvB to convert the ATP-contained energy into a lever motion, pulling 2 nucleotides of DNA out of the RuvA tetramer per ATP hydrolyzed, thus driving DNA branch migration. The RuvB motors rotate together with the DNA substrate, which together with the progressing nucleotide cycle form the mechanistic basis for DNA recombination by continuous HJ branch migration. Branch migration allows RuvC to scan DNA until it finds its consensus sequence, where it cleaves and resolves cruciform DNA. This Anaeromyxobacter dehalogenans (strain 2CP-C) protein is Holliday junction branch migration complex subunit RuvB.